An 88-amino-acid chain; its full sequence is Small ribosomal subunit protein uS15 (88 aa).

The protein belongs to the universal ribosomal protein uS15 family. In terms of assembly, part of the 30S ribosomal subunit. Forms a bridge to the 50S subunit in the 70S ribosome, contacting the 23S rRNA.

Its function is as follows. One of the primary rRNA binding proteins, it binds directly to 16S rRNA where it helps nucleate assembly of the platform of the 30S subunit by binding and bridging several RNA helices of the 16S rRNA. Functionally, forms an intersubunit bridge (bridge B4) with the 23S rRNA of the 50S subunit in the ribosome. This is Small ribosomal subunit protein uS15 from Borrelia hermsii (strain HS1 / DAH).